The following is a 118-amino-acid chain: Large ribosomal subunit protein bL20 (118 aa).

This sequence belongs to the bacterial ribosomal protein bL20 family.

Binds directly to 23S ribosomal RNA and is necessary for the in vitro assembly process of the 50S ribosomal subunit. It is not involved in the protein synthesizing functions of that subunit. This chain is Large ribosomal subunit protein bL20, found in Protochlamydia amoebophila (strain UWE25).